The sequence spans 129 residues: Small ribosomal subunit protein uS11 (129 aa).

It belongs to the universal ribosomal protein uS11 family. As to quaternary structure, part of the 30S ribosomal subunit. Interacts with proteins S7 and S18. Binds to IF-3.

Functionally, located on the platform of the 30S subunit, it bridges several disparate RNA helices of the 16S rRNA. Forms part of the Shine-Dalgarno cleft in the 70S ribosome. The polypeptide is Small ribosomal subunit protein uS11 (Methylobacterium nodulans (strain LMG 21967 / CNCM I-2342 / ORS 2060)).